A 515-amino-acid polypeptide reads, in one-letter code: Maturase K (515 aa).

This sequence belongs to the intron maturase 2 family. MatK subfamily.

It is found in the plastid. The protein resides in the chloroplast. Its function is as follows. Usually encoded in the trnK tRNA gene intron. Probably assists in splicing its own and other chloroplast group II introns. The protein is Maturase K of Pinus uncinata (Mountain pine).